Reading from the N-terminus, the 329-residue chain is Apolipoprotein E (329 aa).

The first 18 residues, 1–18 (MKVLWAALVVALLAGCWA), serve as a signal peptide directing secretion. Tandem repeats lie at residues 92–113 (TLME…EQLG), 114–135 (PMAS…ARLR), 136–157 (SDME…AMLG), 158–179 (QSTE…KRVL), 180–201 (RDAE…EGAE), 202–223 (RSVS…TRHA), 224–245 (KVDA…QQLR), and 246–267 (GRLE…EQME). An 8 X 22 AA approximate tandem repeats region spans residues 92 to 267 (TLMEETMKEI…HLDEVREQME (176 aa)). A Methionine sulfoxide modification is found at Met-155. A Phosphoserine modification is found at Ser-159. The segment at 170 to 180 (HMRKLRKRVLR) is LDL and other lipoprotein receptors binding. 174 to 177 (LRKR) is a heparin binding site. Residues 222–302 (HAKVDALATQ…GWFEPLVEDM (81 aa)) are lipid-binding and lipoprotein association. Position 241 to 248 (241 to 248 (GQQLRGRL)) interacts with heparin. Residues 278 to 329 (NQMRQQAEPFQARLKGWFEPLVEDMQRQWAVLVEKVQAAVGTSPTTPPVETK) form a homooligomerization region. Residues 290–302 (RLKGWFEPLVEDM) form a specificity for association with VLDL region.

The protein belongs to the apolipoprotein A1/A4/E family. Homotetramer. May interact with ABCA1; functionally associated with ABCA1 in the biogenesis of HDLs. May interact with APP/A4 amyloid-beta peptide; the interaction is extremely stable in vitro but its physiological significance is unclear. May interact with MAPT. May interact with MAP2. In the cerebrospinal fluid, interacts with secreted SORL1. Interacts with PMEL; this allows the loading of PMEL luminal fragment on ILVs to induce fibril nucleation. Post-translationally, APOE exists as multiple glycosylated and sialylated glycoforms within cells and in plasma. The extent of glycosylation and sialylation are tissue and context specific. In terms of processing, glycated in plasma VLDL. Phosphorylated by FAM20C in the extracellular medium.

It is found in the secreted. It localises to the extracellular space. The protein localises to the extracellular matrix. The protein resides in the extracellular vesicle. Its subcellular location is the endosome. It is found in the multivesicular body. Its function is as follows. APOE is an apolipoprotein, a protein associating with lipid particles, that mainly functions in lipoprotein-mediated lipid transport between organs via the plasma and interstitial fluids. APOE is a core component of plasma lipoproteins and is involved in their production, conversion and clearance. Apolipoproteins are amphipathic molecules that interact both with lipids of the lipoprotein particle core and the aqueous environment of the plasma. As such, APOE associates with chylomicrons, chylomicron remnants, very low density lipoproteins (VLDL) and intermediate density lipoproteins (IDL) but shows a preferential binding to high-density lipoproteins (HDL). It also binds a wide range of cellular receptors including the LDL receptor/LDLR, the LDL receptor-related proteins LRP1, LRP2 and LRP8 and the very low-density lipoprotein receptor/VLDLR that mediate the cellular uptake of the APOE-containing lipoprotein particles. Finally, APOE also has a heparin-binding activity and binds heparan-sulfate proteoglycans on the surface of cells, a property that supports the capture and the receptor-mediated uptake of APOE-containing lipoproteins by cells. A main function of APOE is to mediate lipoprotein clearance through the uptake of chylomicrons, VLDLs, and HDLs by hepatocytes. APOE is also involved in the biosynthesis by the liver of VLDLs as well as their uptake by peripheral tissues ensuring the delivery of triglycerides and energy storage in muscle, heart and adipose tissues. By participating in the lipoprotein-mediated distribution of lipids among tissues, APOE plays a critical role in plasma and tissues lipid homeostasis. APOE is also involved in two steps of reverse cholesterol transport, the HDLs-mediated transport of cholesterol from peripheral tissues to the liver, and thereby plays an important role in cholesterol homeostasis. First, it is functionally associated with ABCA1 in the biogenesis of HDLs in tissues. Second, it is enriched in circulating HDLs and mediates their uptake by hepatocytes. APOE also plays an important role in lipid transport in the central nervous system, regulating neuron survival and sprouting. In Arctocephalus gazella (Antarctic fur seal), this protein is Apolipoprotein E (APOE).